The following is a 567-amino-acid chain: Signal transducer and activator of transcription b (567 aa).

Residues 449 to 548 (WYDGLVYGFC…LGGRNKPRIR (100 aa)) form the SH2 domain.

It belongs to the transcription factor STAT family. In terms of assembly, may interact with sodium-dependent transporter snf-12; the interaction is probably direct.

The protein resides in the cytoplasm. It localises to the nucleus. It is found in the vesicle. Its function is as follows. Carries out a dual function: signal transduction and activation of transcription. Required, in concert with transcription factor elt-3, for up-regulation of the vacuolar H(+)-ATPase and acceleration of lysosome maturation at molt. As part of the innate immune response to molting and injury of the adult epidermis, positively regulates the expression of epidermal antimicrobial peptides, such as nlp-29. Through positively modulating the expression of epidermal antimicrobial peptides, such as nlp-29, plays a role in resistance to fungal infection and in the response to physical wounding and phorbol ester PMA treatment. Functions cell autonomously in the epidermis, in concert with sodium-dependent transporter snf-12, probably acting at vesicular membranes, downstream of a p38 MAPK/pmk-1 pathway. The chain is Signal transducer and activator of transcription b from Caenorhabditis elegans.